The chain runs to 337 residues: Alcohol dehydrogenase (337 aa).

C38, H61, C92, C95, C98, C106, and C148 together coordinate Zn(2+). Residues 172-177, D195, K200, 260-262, and R331 contribute to the NAD(+) site; these read GIGGLG and VGL.

This sequence belongs to the zinc-containing alcohol dehydrogenase family. Zn(2+) is required as a cofactor.

It catalyses the reaction a primary alcohol + NAD(+) = an aldehyde + NADH + H(+). The enzyme catalyses a secondary alcohol + NAD(+) = a ketone + NADH + H(+). With respect to regulation, substrate inhibition is not observed with any alcohols, and the enzyme-NADH dissociation is not considered to be a rate-limiting step. In terms of biological role, NAD(+)-dependent alcohol dehydrogenase. The protein is Alcohol dehydrogenase (adhT) of Geobacillus stearothermophilus (Bacillus stearothermophilus).